Reading from the N-terminus, the 350-residue chain is Outer membrane protein A (350 aa).

A signal peptide spans 1 to 21 (MKKTAIAIAVALAGFATVAQA). The next 8 beta stranded transmembrane spans lie at 27 to 37 (TWYAGGKLGWS), 59 to 70 (QLGAGAFGGYQV), 74 to 82 (LGFEMGYDW), 100 to 111 (QAVQLTAKLGYP), 116 to 124 (LDIYTRLGG), 146 to 155 (PVFAGGVEWA), 160 to 167 (IATRLEYQ), and 186 to 194 (MLSVGVSYR). A run of 4 repeats spans residues 205–206 (AP), 207–208 (AP), 209–210 (AP), and 211–212 (AP). The tract at residues 205 to 212 (APAPAPAP) is 4 X 2 AA tandem repeats of A-P. One can recognise an OmpA-like domain in the interval 214 to 342 (VTTKTFTLKS…RVAIEVKGYK (129 aa)). Cys315 and Cys327 are disulfide-bonded.

Belongs to the outer membrane OOP (TC 1.B.6) superfamily. OmpA family. In terms of assembly, monomer and homodimer.

The protein resides in the cell outer membrane. Its function is as follows. With TolR probably plays a role in maintaining the position of the peptidoglycan cell wall in the periplasm. Acts as a porin with low permeability that allows slow penetration of small solutes; an internal gate slows down solute passage. Required for conjugation with F-type plasmids; probably serves as the mating receptor on recipient cells. This Klebsiella aerogenes (Enterobacter aerogenes) protein is Outer membrane protein A.